An 892-amino-acid polypeptide reads, in one-letter code: Ice-binding protein 1 (892 aa).

Residues methionine 1–glycine 23 form the signal peptide. A lipid anchor (N-palmitoyl cysteine) is attached at cysteine 24. The S-diacylglycerol cysteine moiety is linked to residue cysteine 24. BIG2 domains lie at threonine 43 to serine 111, threonine 134 to serine 205, serine 221 to aspartate 288, threonine 306 to valine 386, threonine 392 to threonine 471, asparagine 478 to valine 558, and serine 565 to leucine 638. Residues threonine 866–asparagine 869 carry the Ice-binding site motif (T-A/G-X-T/N) motif.

It belongs to the ice-binding protein family.

Its subcellular location is the cell outer membrane. Its function is as follows. Ice-binding adhesion protein that adsorbs this bacterium onto ice to maintain a favorable position in its aquatic habitat. Inhibits growth of the ice crystals. Has high thermal hysteresis (TH) activity, which is the ability to lower the freezing point of an aqueous solution below its melting point. The TH activity of this protein is approximately 1.4 degrees Celsius at 25 uM and little below 2 degrees Celsius at 80 uM. This chain is Ice-binding protein 1, found in Shewanella frigidimarina (strain NCIMB 400).